Reading from the N-terminus, the 172-residue chain is Keratin-associated protein 13-1 (172 aa).

A run of 5 repeats spans residues 46 to 55 (CQLGSSLYRG), 56 to 65 (CQQTCWEPTS), 66 to 75 (CQTSYVESSP), 76 to 85 (CQTSCYRPRT), and 92 to 101 (CQTTYSGSLG). The 5 X 10 AA approximate repeats stretch occupies residues 46-101 (CQLGSSLYRGCQQTCWEPTSCQTSYVESSPCQTSCYRPRTSLLCSPCQTTYSGSLG).

Belongs to the PMG family. In terms of assembly, interacts with hair keratins. In terms of tissue distribution, weak expression seen in the late matrix and entire cortex area of the hair follicle.

Functionally, in the hair cortex, hair keratin intermediate filaments are embedded in an interfilamentous matrix, consisting of hair keratin-associated proteins (KRTAP), which are essential for the formation of a rigid and resistant hair shaft through their extensive disulfide bond cross-linking with abundant cysteine residues of hair keratins. The matrix proteins include the high-sulfur and high-glycine-tyrosine keratins. This Homo sapiens (Human) protein is Keratin-associated protein 13-1 (KRTAP13-1).